The following is a 217-amino-acid chain: Large ribosomal subunit protein uL1 (217 aa).

This sequence belongs to the universal ribosomal protein uL1 family.

The chain is Large ribosomal subunit protein uL1 (RPL10A) from Candida glabrata (strain ATCC 2001 / BCRC 20586 / JCM 3761 / NBRC 0622 / NRRL Y-65 / CBS 138) (Yeast).